A 670-amino-acid polypeptide reads, in one-letter code: Acetyl-coenzyme A synthetase (670 aa).

Residues 211 to 214 and Thr329 each bind CoA; that span reads RGGK. Residues 404–406, 428–433, Asp519, and Arg534 contribute to the ATP site; these read GEP and DTYWQT. Residue Ser542 coordinates CoA. Arg545 provides a ligand contact to ATP. Arg603 provides a ligand contact to CoA.

The protein belongs to the ATP-dependent AMP-binding enzyme family.

The enzyme catalyses acetate + ATP + CoA = acetyl-CoA + AMP + diphosphate. The protein is Acetyl-coenzyme A synthetase (facA) of Emericella nidulans (strain FGSC A4 / ATCC 38163 / CBS 112.46 / NRRL 194 / M139) (Aspergillus nidulans).